The sequence spans 1297 residues: MIPTSVTNSPPPAGLGQNGASASLGSATAAAGGGMLSGLGMVAVSGCGSAGTGAQNNYGSVVLGLASLILEGRPIADDEYQQQTVGVVGSGAATAGSGGGRLSPRPSTSRAAINITTNPYGSMGGSENRAVNGSGSTGSPSSSSLTHQRWTQKLCQLRQISPAAQTMSAEPELVSLAINDLNKDHGDYEIVRRVMLNRAGGTGLVSSAGGGTNNSSAASSPGSNSSDNILHSLQSLATTCLRGGPALAPPPSVESRPLNLAFHWSGLGGSGGRGLGFGGGAASISNTPTTTATATASSGASSSASRPKHGPHCDQFLRKMGLAKGEMPSEAEEHICDMSYVNMTCNRWRAYCMKMEAILARREPVCIEVYLGPVSHKLLLEQWIICGREKVPPPTMTLPSLCSAIRSQLYFSQIVAWCDLLRKCDPSVYDSGRVIFSNCGNNAGDLATSYTTCGGQKRPRLNIFYRIKQHTTTNSNSGLHQEDGFSAKANVHNFPNVNVSESYSISVSVRSLPRINGGLPHVEPLPPSPAPRSLRPCGGDPASTPTGGGGLHAATPTGLGARTSALTPTTTAGGSNCDNGKPGMGQILDELDGDTSLSHRERQLQKYRKRMQRRDKKRERKATPDRLNSRQQSEEPMDEGEESQTQSQTTSETQSLALTLQQPRRIAMISTGTQTSLSSCQQCGSEKTLLCLSCTGGGGAHGGSNGTANGSTNGATDDGDDSDTTASEMEETSSCSLSSADLIVGTPRNNAELLLQAIQRTPKNRNRKPHPGVLDQVSCRNADLNGGQNNNLLKATPATSGCQVCKRQKTQHNFANGKVHQPTNGKQASNGYASMHLEAEKQPDVVQILATKLTPNIERCSLNPVERCKTPPPGVADHIVVQFKTPLSQVPAKHQPDAMVPLQQQQLGKSSSKPAQLRLNCGSNLLESETPPPMTSPQMRKALPKVNLTTIFCSSAPIAIGCPAFSFDPAALSHARSQLLAPDVSVTPPVQKSFSAPTLPHAASLSVSPRFSKQALAAHKRRSRHLSDRSDRSSLGSDEQLSDEDLESGLCSPAGGSPLKCRARLAAQFGGRPLLGNLEESLLQRRLMPKIEVMGFTLQLGASGGFCPTQVNIPAVSYFYELHGETLSTPYLCEIRLPRKGYSVPRSGTVQATLLNPIGTVVRMFVIPYDMRDMPPLHRTFIRQRILAEELSQDQDEGHKVPRSPTVTSTTSKLGHFISAEQMKRLRYSIHLKFQTSRSGRLCLHTDIRLLISRRTDCDTAAAHAKGVLEAPNELVTDTMMPAEPRYSARQESAGRI.

2 disordered regions span residues 1 to 22 (MIPT…GASA) and 117 to 149 (TNPY…THQR). Residues 133 to 144 (GSGSTGSPSSSS) are compositionally biased toward low complexity. The interval 174–182 (VSLAINDLN) is transactivation domain 1 (TAD1). Disordered stretches follow at residues 206 to 227 (SSAG…NSSD), 287 to 311 (TPTT…KHGP), 518 to 655 (GLPH…ETQS), 704 to 741 (SNGT…SSAD), and 1017 to 1048 (AAHK…DLES). Low complexity-rich tracts occupy residues 213-226 (NNSS…SNSS) and 287-305 (TPTT…SSAS). Over residues 564-578 (SALTPTTTAGGSNCD) the composition is skewed to polar residues. Residues 605–620 (QKYRKRMQRRDKKRER) are compositionally biased toward basic residues. 2 stretches are compositionally biased toward low complexity: residues 643 to 655 (SQTQ…ETQS) and 706 to 716 (GTANGSTNGAT). Residues 717-731 (DDGDDSDTTASEMEE) show a composition bias toward acidic residues. Positions 1074 to 1132 (LLGNLEESLLQRRLMPKIEVMGFTLQLGASGGFCPTQVNIPAVSYFYELHGETLSTPYL) are required for macropage invasion. Residues 1150 to 1158 (VQATLLNPI) form a transactivation domain 2 (TAD2) region. Residues 1192-1213 (SQDQDEGHKVPRSPTVTSTTSK) are disordered. Low complexity predominate over residues 1203–1212 (RSPTVTSTTS).

It belongs to the ATOS family. In terms of tissue distribution, expressed in macrophages.

It is found in the nucleus. Transcription regulator that synchronizes transcriptional and translational programs to promote macrophage invasion of tissues. Required in macrophages for their early invasion into the extended germband. Induces transcriptional expression of metabolic enzymes as well as of the translational regulator pths/DDX47. With pths/DDX47, adjusts transcription and translation of a subset of OXPHOS genes to increase mitochondrial bioenergetics and allow macrophage tissue invasion. The polypeptide is Protein Atossa (Drosophila melanogaster (Fruit fly)).